A 192-amino-acid chain; its full sequence is Thymidine kinase (192 aa).

ATP-binding positions include Ser9–Ser16 and Asp87–Gln90. The active-site Proton acceptor is Glu88. Residues Cys145, Cys147, Cys182, and His185 each contribute to the Zn(2+) site.

Belongs to the thymidine kinase family. Homotetramer.

It is found in the cytoplasm. The catalysed reaction is thymidine + ATP = dTMP + ADP + H(+). The chain is Thymidine kinase from Vibrio vulnificus (strain CMCP6).